A 292-amino-acid chain; its full sequence is Ribosomal RNA small subunit methyltransferase A (292 aa).

S-adenosyl-L-methionine-binding residues include N46, L48, G73, E94, D118, and N136.

Belongs to the class I-like SAM-binding methyltransferase superfamily. rRNA adenine N(6)-methyltransferase family. RsmA subfamily.

The protein localises to the cytoplasm. It carries out the reaction adenosine(1518)/adenosine(1519) in 16S rRNA + 4 S-adenosyl-L-methionine = N(6)-dimethyladenosine(1518)/N(6)-dimethyladenosine(1519) in 16S rRNA + 4 S-adenosyl-L-homocysteine + 4 H(+). In terms of biological role, specifically dimethylates two adjacent adenosines (A1518 and A1519) in the loop of a conserved hairpin near the 3'-end of 16S rRNA in the 30S particle. May play a critical role in biogenesis of 30S subunits. This chain is Ribosomal RNA small subunit methyltransferase A, found in Deinococcus radiodurans (strain ATCC 13939 / DSM 20539 / JCM 16871 / CCUG 27074 / LMG 4051 / NBRC 15346 / NCIMB 9279 / VKM B-1422 / R1).